The chain runs to 498 residues: Cytochrome P450 monooxygenase ltmP (498 aa).

Residues 1–21 (MLMLHAVPVGICLLLWYVVYG) form the signal peptide. Residue Asn420 is glycosylated (N-linked (GlcNAc...) asparagine). Cys435 is a heme binding site.

It belongs to the cytochrome P450 family. Heme serves as cofactor.

The protein operates within secondary metabolite biosynthesis. In terms of biological role, cytochrome P450 monooxygenase; part of the gene clusters that mediates the biosynthesis of lolitrems, indole-diterpene mycotoxins that are potent tremorgens in mammals, and are synthesized by clavicipitaceous fungal endophytes in association with their grass hosts. The geranylgeranyl diphosphate (GGPP) synthase ltmG is proposed to catalyze the first step in lolitrem biosynthesis. LtmG catalyzes a series of iterative condensations of isopentenyl diphosphate (IPP) with dimethylallyl diphosphate (DMAPP), geranyl diphosphate (GPP), and farnesyl diphosphate (FPP), to form GGPP. GGPP then condenses with indole-3-glycerol phosphate to form 3-geranylgeranylindole, an acyclic intermediate, to be incorporated into paxilline. Either ltmG or ltmC could be responsible for this step, as both are putative prenyl transferases. The FAD-dependent monooxygenase ltmM then catalyzes the epoxidation of the two terminal alkenes of the geranylgeranyl moiety, which is subsequently cyclized by ltmB, to paspaline. The cytochrome P450 monooxygenases ltmQ and ltmP can sequentially oxidize paspaline to terpendole E and terpendole F. Alternatively, ltmP converts paspaline to an intermediate which is oxidized by ltmQ to terpendole F. LtmF, ltmK, ltmE and ltmJ appear to be unique to the epichloe endophytes. The prenyltransferase ltmF is involved in the 27-hydroxyl-O-prenylation. The cytochrome P450 monooxygenase ltmK is required for the oxidative acetal ring formation. The multi-functional prenyltransferase ltmE is required for C20- and C21-prenylations of the indole ring of paspalanes and acts together with the cytochrome P450 monooxygenase ltmJ to yield lolitremanes by multiple oxidations and ring closures. The stereoisomer pairs of lolitriol and lolitrem N or lolitrem B and lolitrem F may be attributed to variations in the way in which ring closure can occur under the action of ltmJ. While the major product of this pathway is lolitrem B, the prenyl transferases and cytochrome P450 monooxygenases identified in this pathway have a remarkable versatility in their regio- and stereo-specificities to generate a diverse range of metabolites that are products of a metabolic grid rather than a linear pathway. In Epichloe festucae var. lolii (Neotyphodium lolii), this protein is Cytochrome P450 monooxygenase ltmP.